The sequence spans 122 residues: Large ribosomal subunit protein uL24 (122 aa).

Belongs to the universal ribosomal protein uL24 family. In terms of assembly, part of the 50S ribosomal subunit.

Functionally, one of two assembly initiator proteins, it binds directly to the 5'-end of the 23S rRNA, where it nucleates assembly of the 50S subunit. One of the proteins that surrounds the polypeptide exit tunnel on the outside of the subunit. In Trichodesmium erythraeum (strain IMS101), this protein is Large ribosomal subunit protein uL24.